Consider the following 519-residue polypeptide: Trichothecene 15-O-acetyltransferase TRI3 (519 aa).

His-414 provides a ligand contact to 15-deacetylcalonectrin.

Belongs to the trichothecene O-acetyltransferase family.

The protein operates within sesquiterpene biosynthesis; trichothecene biosynthesis. Its function is as follows. 15-O-acetyltransferase; part of the core gene cluster that mediates the biosynthesis of trichothecenes, a very large family of chemically related bicyclic sesquiterpene compounds acting as mycotoxins, including T2-toxin. The biosynthesis of trichothecenes begins with the cyclization of farnesyl diphosphate to trichodiene and is catalyzed by the trichodiene synthase TRI5. Trichodiene undergoes a series of oxygenations catalyzed by the cytochrome P450 monooxygenase TRI4. TRI4 controls the addition of four oxygens at C-2, C-3, C-11, and the C-12, C-13-epoxide to form the intermediate isotrichotriol. Isotrichotriol then undergoes a non-enzymatic isomerization and cyclization to form isotrichodermol. During this process, the oxygen at the C-2 position becomes the pyran ring oxygen and the hydroxyl group at C-11 is lost. More complex type A trichothecenes are built by modifying isotrichodermol through a series of paired hydroxylation and acetylation or acylation steps. Isotrichodermol is converted to isotrichodermin by the acetyltransferase TRI101. TRI101 encodes a C-3 transacetylase that acts as a self-protection or resistance factor during biosynthesis and that the presence of a free C-3 hydroxyl group is a key component of Fusarium trichothecene phytotoxicity. A second hydroxyl group is added to C-15 by the trichothecene C-15 hydroxylase TRI11, producing 15-decalonectrin, which is then acetylated by TRI3, producing calonectrin. A third hydroxyl group is added at C-4 by the cytochrome P450 monooxygenase TRI13, converting calonectrin to 3,15-diacetoxyspirpenol, which is subsequently acetylated by the acetyltransferase TRI7. A fourth hydroxyl group is added to C-8 by the cytochrome P450 monooxygenase TRI1, followed by the addition of an isovaleryl moiety by TRI16. Finally, the acetyl group is removed from the C-3 position by the trichothecene C-3 esterase TRI8 to produce T-2 toxin. This Fusarium sporotrichioides protein is Trichothecene 15-O-acetyltransferase TRI3.